A 371-amino-acid polypeptide reads, in one-letter code: DNA replication and repair protein RecF (371 aa).

Position 30-37 (30-37 (GENAQGKT)) interacts with ATP.

This sequence belongs to the RecF family.

The protein localises to the cytoplasm. Its function is as follows. The RecF protein is involved in DNA metabolism; it is required for DNA replication and normal SOS inducibility. RecF binds preferentially to single-stranded, linear DNA. It also seems to bind ATP. This Staphylococcus haemolyticus (strain JCSC1435) protein is DNA replication and repair protein RecF.